Here is a 374-residue protein sequence, read N- to C-terminus: Alcohol dehydrogenase 3, mitochondrial (374 aa).

The transit peptide at 1–26 directs the protein to the mitochondrion; sequence MLRLTSARSIVSPLRKGAFGSIRTLA. Zn(2+) is bound by residues cysteine 70, histidine 93, cysteine 124, cysteine 127, cysteine 130, cysteine 138, and cysteine 180. NAD(+)-binding positions include 204–210, aspartate 228, lysine 233, 295–297, and arginine 367; these read GAAGGLG and VGL.

This sequence belongs to the zinc-containing alcohol dehydrogenase family. In terms of assembly, homotetramer. The cofactor is Zn(2+).

Its subcellular location is the mitochondrion matrix. The enzyme catalyses a primary alcohol + NAD(+) = an aldehyde + NADH + H(+). The catalysed reaction is a secondary alcohol + NAD(+) = a ketone + NADH + H(+). In Kluyveromyces lactis (strain ATCC 8585 / CBS 2359 / DSM 70799 / NBRC 1267 / NRRL Y-1140 / WM37) (Yeast), this protein is Alcohol dehydrogenase 3, mitochondrial (ADH3).